A 178-amino-acid polypeptide reads, in one-letter code: Orotate phosphoribosyltransferase (178 aa).

5-phospho-alpha-D-ribose 1-diphosphate-binding positions include arginine 92, lysine 93, lysine 96, and 118–126; that span reads EDVTTTGGS. 2 residues coordinate orotate: threonine 122 and arginine 150.

It belongs to the purine/pyrimidine phosphoribosyltransferase family. PyrE subfamily. As to quaternary structure, homodimer. Mg(2+) serves as cofactor.

The catalysed reaction is orotidine 5'-phosphate + diphosphate = orotate + 5-phospho-alpha-D-ribose 1-diphosphate. It participates in pyrimidine metabolism; UMP biosynthesis via de novo pathway; UMP from orotate: step 1/2. Catalyzes the transfer of a ribosyl phosphate group from 5-phosphoribose 1-diphosphate to orotate, leading to the formation of orotidine monophosphate (OMP). The sequence is that of Orotate phosphoribosyltransferase from Methanosphaera stadtmanae (strain ATCC 43021 / DSM 3091 / JCM 11832 / MCB-3).